The primary structure comprises 242 residues: MSWQRPDGRTAAQLRPISFQRHFTRYAPGSVLVKFGDTHVLCTASVAEEVPPFLQNTGQGWLTAEYRMLPTATQQRQPRETLKVSGRTAEIQRLIGRSLRAALDFHKLGSRTITVDADVLQADGSTRTAAITGGYVALHDAITWLYKQGLLDPAQGSPLRQQVAALSVGIVRGEVLVDLCYEEDSQAEVDMNIVMNEQGALIEIQGTAEAGCFDRSQLLQMLDMAQAGIQELLRAQRETLNL.

Phosphate-binding positions include Arg87 and 125–127 (STR).

The protein belongs to the RNase PH family. As to quaternary structure, homohexameric ring arranged as a trimer of dimers.

It carries out the reaction tRNA(n+1) + phosphate = tRNA(n) + a ribonucleoside 5'-diphosphate. Phosphorolytic 3'-5' exoribonuclease that plays an important role in tRNA 3'-end maturation. Removes nucleotide residues following the 3'-CCA terminus of tRNAs; can also add nucleotides to the ends of RNA molecules by using nucleoside diphosphates as substrates, but this may not be physiologically important. Probably plays a role in initiation of 16S rRNA degradation (leading to ribosome degradation) during starvation. The polypeptide is Ribonuclease PH (Synechococcus sp. (strain JA-3-3Ab) (Cyanobacteria bacterium Yellowstone A-Prime)).